The chain runs to 273 residues: F-actin-capping protein subunit alpha (273 aa).

Belongs to the F-actin-capping protein alpha subunit family. Component of the F-actin capping complex, composed of a heterodimer of an alpha and a beta subunit.

It is found in the cytoplasm. The protein resides in the cytoskeleton. It localises to the actin patch. In terms of biological role, F-actin-capping proteins bind in a Ca(2+)-independent manner to the fast growing ends of actin filaments (barbed end) thereby blocking the exchange of subunits at these ends. Unlike other capping proteins (such as gelsolin and severin), these proteins do not sever actin filaments. The protein is F-actin-capping protein subunit alpha (cap1) of Aspergillus oryzae (strain ATCC 42149 / RIB 40) (Yellow koji mold).